The sequence spans 1060 residues: Carbamoyl phosphate synthase large chain (1060 aa).

The tract at residues 1–401 (MPKRTDIRKI…SLLKACRSLE (401 aa)) is carboxyphosphate synthetic domain. Arg129, Arg169, Gly175, Gly176, Arg208, Ile210, Glu215, Gly241, Ile242, His243, Gln284, and Glu298 together coordinate ATP. The region spanning 133–327 (KQLMEELNQP…IAKLAAKIAV (195 aa)) is the ATP-grasp 1 domain. Mg(2+)-binding residues include Gln284, Glu298, and Asn300. Gln284, Glu298, and Asn300 together coordinate Mn(2+). Residues 402–546 (IGVDHIKIAD…YSTYAVENES (145 aa)) are oligomerization domain. A carbamoyl phosphate synthetic domain region spans residues 547–929 (LISDKASILV…ALYKAFEAAY (383 aa)). The ATP-grasp 2 domain maps to 671-861 (EATLQALNIP…MAQVATKVIL (191 aa)). ATP contacts are provided by Arg707, Ala746, Leu748, Glu752, Gly777, Val778, His779, Ser780, Gln820, and Glu832. Residues Gln820, Glu832, and Asn834 each contribute to the Mg(2+) site. Gln820, Glu832, and Asn834 together coordinate Mn(2+). The MGS-like domain maps to 930 to 1060 (LHMPDYGNIV…SRAFTLKVLD (131 aa)). Residues 930–1060 (LHMPDYGNIV…SRAFTLKVLD (131 aa)) form an allosteric domain region.

Belongs to the CarB family. In terms of assembly, composed of two chains; the small (or glutamine) chain promotes the hydrolysis of glutamine to ammonia, which is used by the large (or ammonia) chain to synthesize carbamoyl phosphate. Tetramer of heterodimers (alpha,beta)4. Requires Mg(2+) as cofactor. The cofactor is Mn(2+).

It catalyses the reaction hydrogencarbonate + L-glutamine + 2 ATP + H2O = carbamoyl phosphate + L-glutamate + 2 ADP + phosphate + 2 H(+). The enzyme catalyses hydrogencarbonate + NH4(+) + 2 ATP = carbamoyl phosphate + 2 ADP + phosphate + 2 H(+). It functions in the pathway amino-acid biosynthesis; L-arginine biosynthesis; carbamoyl phosphate from bicarbonate: step 1/1. It participates in pyrimidine metabolism; UMP biosynthesis via de novo pathway; (S)-dihydroorotate from bicarbonate: step 1/3. In terms of biological role, large subunit of the glutamine-dependent carbamoyl phosphate synthetase (CPSase). CPSase catalyzes the formation of carbamoyl phosphate from the ammonia moiety of glutamine, carbonate, and phosphate donated by ATP, constituting the first step of 2 biosynthetic pathways, one leading to arginine and/or urea and the other to pyrimidine nucleotides. The large subunit (synthetase) binds the substrates ammonia (free or transferred from glutamine from the small subunit), hydrogencarbonate and ATP and carries out an ATP-coupled ligase reaction, activating hydrogencarbonate by forming carboxy phosphate which reacts with ammonia to form carbamoyl phosphate. The chain is Carbamoyl phosphate synthase large chain from Streptococcus agalactiae serotype V (strain ATCC BAA-611 / 2603 V/R).